A 1087-amino-acid polypeptide reads, in one-letter code: MKSNTKNSVKRKSPPPVNPNKKFPSFEGKQTSIKDFFFNDTTTPPKTPTQPIRFTQNNNKENDKSNNNNNNNNTITPIKKTTTTTTVVVESFDDSRNTNLIQQFQKASTPSSPQIPNKLPQQENQQQIPNTQQQQIKQLQQQQQQQQQESPNNLFKTIKTTTTTETFEEFLLSQPTTPPPSNTTTTTTTTSSSSPSSSNNITTIDDKNNLIKNNRYYLNDFLIVTETVYKRDKHLFINDEKDYIEGMIETLDRDSQHLFVRLYNRKGPWFQINELKSSNYQNEIKNIGAAIESLVEYGFLEYYSSDKHDYNEIANLLKIDQLKSIASSFSIPNSSGKETFLKVISGEPFKGQSTLFSPKPIYKKKVENLVGESIKIVTEVVELWRMIHHLYFYSWSTHDSKSMIVNNIMGIKYPEYTVWKSKVKKEVQQKEEEVEKEKEEILQNQLIQVKQESDVIDLTQNSSGSSNNNNNNNNNNNNNNNNNNNIKEYDIDLTENESIFPNRESLLKYENARKLEEKSINLYESGGDLVALESILQVCLDELGRSVSKKVKYSFALKFTVGWVYTRILSWSIDIFEKLRKYQQCIDFLMLLIESPYCRGKRGYWWQRMIINHKHLHRSDDALLIAERSLKEDPFLRSGDRLAIEKHLIQLSSPPRRWRIPAGLIQFSYKLKEPISTTIYREKVSNNQQGYKSKYLFLTPQIKINKIKKIIIKSSQSQNNQQKVQSSLSSQIQTQIQTQIQTQIQSSQIQIQSPIQSQSQSQNQTPIQSQINNNNNNILAISSQKSFDSILTTTSINNTQSSSQNIYIDEETSLEITSDDELFPPGQSYKIEKENQLQITNSVKKEEEQEEEEEEEEEGQGQEEEEEEEEIIEITHGTVEEVSLEHYSQNGGWEGIHCETSIFITLYVLYFWDIIFDSNVPHVFQSPFQNSPLDFGSDEFYFTRKEAIDNRIKRLEHSNYDDLLILLNQSWLHNGCEARGVNWKSTSLEQLSIISKCLGGKLIAFISRLLTEDFKSFSHGMPDLLLWKLNNNNDDDIDDKNNNNSSIKFVEVKGTGDRLRDQQRIWIDMLISFGCDVEVCLVKNKKN.

6 disordered regions span residues 1-79, 104-154, 169-202, 459-486, 816-835, and 842-871; these read MKSN…TPIK, FQKA…PNNL, EFLL…NNIT, TQNS…NNNI, ITSD…EKEN, and SVKK…EEEI. Over residues 41–79 the composition is skewed to low complexity; sequence TTTPPKTPTQPIRFTQNNNKENDKSNNNNNNNNTITPIK. The segment covering 104-115 has biased composition (polar residues); sequence FQKASTPSSPQI. Composition is skewed to low complexity over residues 118–154, 182–202, and 467–485; these read KLPQ…PNNL, NTTT…NNIT, and NNNN…NNNN. Coiled coils occupy residues 419–490 and 830–874; these read WKSK…KEYD and KIEK…IIEI. Residues 848–871 show a composition bias toward acidic residues; sequence EQEEEEEEEEEGQGQEEEEEEEEI. Mn(2+) is bound by residues Glu-899, Asp-1023, Glu-1051, and Val-1052. Residues 961 to 1083 form the VRR-NUC domain; sequence DDLLILLNQS…GCDVEVCLVK (123 aa).

This sequence belongs to the FAN1 family. Requires Mn(2+) as cofactor. Mg(2+) is required as a cofactor.

The catalysed reaction is Hydrolytically removes 5'-nucleotides successively from the 3'-hydroxy termini of 3'-hydroxy-terminated oligonucleotides.. In terms of biological role, nuclease required for the repair of DNA interstrand cross-links (ICL). Acts as a 5'-3' exonuclease that anchors at a cut end of DNA and cleaves DNA successively at every third nucleotide, allowing to excise an ICL from one strand through flanking incisions. The chain is Fanconi-associated nuclease 1 homolog (mtmr15) from Dictyostelium discoideum (Social amoeba).